A 331-amino-acid polypeptide reads, in one-letter code: tRNA-cytidine(32) 2-sulfurtransferase (331 aa).

Residues 71 to 76 carry the PP-loop motif motif; it reads SGGKDS. [4Fe-4S] cluster-binding residues include C146, C149, and C237.

It belongs to the TtcA family. In terms of assembly, homodimer. Mg(2+) is required as a cofactor. Requires [4Fe-4S] cluster as cofactor.

The protein resides in the cytoplasm. It carries out the reaction cytidine(32) in tRNA + S-sulfanyl-L-cysteinyl-[cysteine desulfurase] + AH2 + ATP = 2-thiocytidine(32) in tRNA + L-cysteinyl-[cysteine desulfurase] + A + AMP + diphosphate + H(+). Its pathway is tRNA modification. In terms of biological role, catalyzes the ATP-dependent 2-thiolation of cytidine in position 32 of tRNA, to form 2-thiocytidine (s(2)C32). The sulfur atoms are provided by the cysteine/cysteine desulfurase (IscS) system. The chain is tRNA-cytidine(32) 2-sulfurtransferase from Burkholderia multivorans (strain ATCC 17616 / 249).